Consider the following 392-residue polypeptide: Stilbene synthase 4 (392 aa).

55–58 (KFNR) provides a ligand contact to substrate. C164 is a catalytic residue. Residues L267 and 305 to 307 (GGP) each bind substrate.

It belongs to the thiolase-like superfamily. Chalcone/stilbene synthases family. Homodimer.

It is found in the cytoplasm. It carries out the reaction 4-coumaroyl-CoA + 3 malonyl-CoA + 3 H(+) = trans-resveratrol + 4 CO2 + 4 CoA. The protein operates within phytoalexin biosynthesis; 3,4',5-trihydroxystilbene biosynthesis; 3,4',5-trihydroxystilbene from trans-4-coumarate: step 2/2. Mediates resistance to pathogens which are sensitive to stilbenes. This is Stilbene synthase 4 from Vitis vinifera (Grape).